Consider the following 367-residue polypeptide: Mating-type protein ALPHA2 (367 aa).

A DNA-binding region (homeobox; TALE-type) is located at residues 273–338 (GADAIDSEKL…NKRRTGAKKR (66 aa)).

The protein belongs to the TALE/M-ATYP homeobox family. Forms a heterodimer with A1.

It localises to the nucleus. Mating type proteins are sequence specific DNA-binding proteins that act as master switches in yeast differentiation by controlling gene expression in a cell type-specific fashion. Transcriptional corepressor that acts in conjunction with A1 to repress transcription of haploid-specific genes. In Yarrowia lipolytica (strain CLIB 122 / E 150) (Yeast), this protein is Mating-type protein ALPHA2 (MATB2).